The primary structure comprises 59 residues: MAFDKKLLDIVACPVCKGKLEYDKMTQQLICKADKLAYPITEGIPVLLENRAVPLTESV.

This sequence belongs to the UPF0434 family.

This chain is UPF0434 protein Shew185_1670, found in Shewanella baltica (strain OS185).